The primary structure comprises 209 residues: Claudin-4 (209 aa).

Residues 1-7 (MASMGLQ) are Cytoplasmic-facing. Residues 1–103 (MASMGLQVMG…GVLLSVVGGK (103 aa)) form an interaction with EPHA2 region. The chain crosses the membrane as a helical span at residues 8–28 (VMGIALAVLGWLAVMLCCALP). The Extracellular portion of the chain corresponds to 29–81 (MWRVTAFIGSNIVTSQTIWEGLWMNCVVQSTGQMQCKVYDSLLALPQDLQAAR). C54 and C64 form a disulfide bridge. Residues 82–102 (ALVIISIIVAALGVLLSVVGG) traverse the membrane as a helical segment. Topologically, residues 103–117 (KCTNCLEDESAKAKT) are cytoplasmic. Residues 118 to 138 (MIVAGVVFLLAGLMVIVPVSW) form a helical membrane-spanning segment. Topologically, residues 139–160 (TAHNIIQDFYNPLVASGQKREM) are extracellular. Residues 161–181 (GASLYVGWAASGLLLLGGGLL) traverse the membrane as a helical segment. Residues 182-209 (CCNCPPRTDKPYSAKYSAARSAAASNYV) lie on the Cytoplasmic side of the membrane. Phosphotyrosine; by EPHA2 is present on Y208. Residues 208–209 (YV) form an interactions with TJP1, TJP2 and TJP3 region.

The protein belongs to the claudin family. Can form heteropolymeric strands with other claudins. Interacts with CLDN8. Interacts with CLDN1. Directly interacts with TJP1/ZO-1. Interacts with TJP2/ZO-2 and TJP3/ZO-3. Interacts with EPHA2; phosphorylates CLDN4 and may regulate tight junctions. In terms of assembly, (Microbial infection) Interacts (via both extracellular domains) with Clostridium perfringens enterotoxin CPE; the interaction may disrupt claudin assembly in tight junctions. Post-translationally, phosphorylated. Phosphorylation by EPHA2 is stimulated by EFNA1 and alters interaction with TJP1.

It is found in the cell junction. It localises to the tight junction. Its subcellular location is the cell membrane. It catalyses the reaction chloride(in) = chloride(out). The enzyme catalyses bromide(in) = bromide(out). It carries out the reaction iodide(out) = iodide(in). The catalysed reaction is fluoride(in) = fluoride(out). Functionally, can associate with other claudins to regulate tight junction structural and functional strand dynamics. May coassemble with CLDN8 into tight junction strands containing anion-selective channels that convey paracellular chloride permeability in renal collecting ducts. May integrate into CLDN3 strands to modulate localized tight junction barrier properties. May disrupt strand assembly of channel-forming CLDN2 and CLDN15 and inhibit cation conductance. Cannot form tight junction strands on its own. The polypeptide is Claudin-4 (Homo sapiens (Human)).